We begin with the raw amino-acid sequence, 416 residues long: Putative F-box/kelch-repeat protein At1g12870 (416 aa).

An F-box domain is found at 27–76 (MIASSSLPDDVVEEIFLKLPVKALMRFKSLSKQWRSTLESCYFSQRHLKI). Kelch repeat units lie at residues 199–243 (LVWL…PASA) and 297–341 (CMYE…HVLD).

This Arabidopsis thaliana (Mouse-ear cress) protein is Putative F-box/kelch-repeat protein At1g12870.